Here is a 611-residue protein sequence, read N- to C-terminus: Broad-specificity linear acyl-CoA dehydrogenase FadE5 (611 aa).

Residues 162 to 165 (MVLT), serine 171, and threonine 198 contribute to the FAD site. Serine 171 provides a ligand contact to a 2,3-saturated acyl-CoA. A 2,3-saturated acyl-CoA contacts are provided by residues 224-225 (TK) and arginine 301. Arginine 326 lines the FAD pocket. Lysine 338 contributes to the a 2,3-saturated acyl-CoA binding site. 420-424 (QTLGG) serves as a coordination point for FAD. Residue glutamate 447 participates in a 2,3-saturated acyl-CoA binding. Glutamate 447 serves as the catalytic Proton acceptor. Position 449 (threonine 449) interacts with FAD. A 2,3-saturated acyl-CoA contacts are provided by residues aspartate 456 and 460–461 (RK).

The protein belongs to the acyl-CoA dehydrogenase family. In terms of assembly, homodimer. FAD is required as a cofactor.

It catalyses the reaction a long-chain 2,3-saturated fatty acyl-CoA + oxidized [electron-transfer flavoprotein] + H(+) = a long-chain (2E)-enoyl-CoA + reduced [electron-transfer flavoprotein]. It carries out the reaction a medium-chain 2,3-saturated fatty acyl-CoA + oxidized [electron-transfer flavoprotein] + H(+) = a medium-chain (2E)-enoyl-CoA + reduced [electron-transfer flavoprotein]. The catalysed reaction is a short-chain 2,3-saturated fatty acyl-CoA + oxidized [electron-transfer flavoprotein] + H(+) = a short-chain (2E)-enoyl-CoA + reduced [electron-transfer flavoprotein]. The enzyme catalyses octadecanoyl-CoA + oxidized [electron-transfer flavoprotein] + H(+) = (2E)-octadecenoyl-CoA + reduced [electron-transfer flavoprotein]. It catalyses the reaction oxidized [electron-transfer flavoprotein] + hexadecanoyl-CoA + H(+) = (2E)-hexadecenoyl-CoA + reduced [electron-transfer flavoprotein]. It carries out the reaction dodecanoyl-CoA + oxidized [electron-transfer flavoprotein] + H(+) = (2E)-dodecenoyl-CoA + reduced [electron-transfer flavoprotein]. The catalysed reaction is decanoyl-CoA + oxidized [electron-transfer flavoprotein] + H(+) = (2E)-decenoyl-CoA + reduced [electron-transfer flavoprotein]. The enzyme catalyses hexanoyl-CoA + oxidized [electron-transfer flavoprotein] + H(+) = (2E)-hexenoyl-CoA + reduced [electron-transfer flavoprotein]. It catalyses the reaction butanoyl-CoA + oxidized [electron-transfer flavoprotein] + H(+) = (2E)-butenoyl-CoA + reduced [electron-transfer flavoprotein]. It functions in the pathway lipid metabolism; fatty acid metabolism. In terms of biological role, acyl-CoA dehydrogenase that exhibits broad specificity for linear acyl-CoA substrates, with a preference for long-chain substrates. The sequence is that of Broad-specificity linear acyl-CoA dehydrogenase FadE5 from Mycobacterium tuberculosis (strain ATCC 25618 / H37Rv).